We begin with the raw amino-acid sequence, 361 residues long: Cysteine-rich with EGF-like domain protein 2-A (361 aa).

A signal peptide spans 1 to 24 (MNGSRALHLSAWLLLCLLCSAAVA). The EGF-like 1 domain occupies 134–176 (DCLACLGGSERPCHGNGFCNGDGTRSGDGLCRCEAEYTGPFCL). 3 disulfide bridges follow: Cys138-Cys152, Cys146-Cys164, and Cys166-Cys175. Asn188 carries an N-linked (GlcNAc...) asparagine glycan. 2 FU repeats span residues 191 to 238 (YSLC…EESP) and 251 to 298 (SFLC…SEQV). The EGF-like 2; calcium-binding domain maps to 288–329 (DVDECDASEQVCSRENETCLNTAGSYKCTCSEGFEDKEGNCV). Cystine bridges form between Cys292/Cys306, Cys299/Cys315, and Cys317/Cys328. An N-linked (GlcNAc...) asparagine glycan is attached at Asn303. Positions 341–361 (DGEMGTSASDINISNTAHEDL) are disordered. Residues 346 to 361 (TSASDINISNTAHEDL) show a composition bias toward polar residues. A glycan (N-linked (GlcNAc...) asparagine) is linked at Asn352.

Belongs to the CRELD family.

The protein localises to the secreted. It is found in the endoplasmic reticulum. Functionally, possible role in neuronal acetylcholine receptor transport. The chain is Cysteine-rich with EGF-like domain protein 2-A (creld2-a) from Xenopus laevis (African clawed frog).